The chain runs to 257 residues: Aspartate/glutamate leucyltransferase (257 aa).

It belongs to the R-transferase family. Bpt subfamily.

The protein resides in the cytoplasm. The enzyme catalyses N-terminal L-glutamyl-[protein] + L-leucyl-tRNA(Leu) = N-terminal L-leucyl-L-glutamyl-[protein] + tRNA(Leu) + H(+). It carries out the reaction N-terminal L-aspartyl-[protein] + L-leucyl-tRNA(Leu) = N-terminal L-leucyl-L-aspartyl-[protein] + tRNA(Leu) + H(+). Its function is as follows. Functions in the N-end rule pathway of protein degradation where it conjugates Leu from its aminoacyl-tRNA to the N-termini of proteins containing an N-terminal aspartate or glutamate. The polypeptide is Aspartate/glutamate leucyltransferase (Rhodopseudomonas palustris (strain BisB5)).